A 290-amino-acid polypeptide reads, in one-letter code: MRFFKQTSTNLNQLLYGIDPRGSKRGRDAYLYYRSTTQSGHHKRTWVHTFFRILQYNKFLYMPSKASGHDTYGHHTVSSKGSTHKFKRALHSINMNNMRIFLYAFWYIRDPRSYRLSGISFSTDGGIQTLPVTRRFHLMRLYLAADFKEFFTLDLRWVNSIRYIENIQKIRSFTLVSYVPNILNGRPLFARARGSACLVRYRNKLQHLGLIWVKLPSGKYRRVSNGNSVLLGKIAPKLRSELGNTRAGYWVNRGIKPQVRGIVKNPVDHPNGGRARSIARHRSPWGWFTK.

It belongs to the universal ribosomal protein uL2 family. In terms of assembly, probably part of the large ribosomal subunit.

The protein localises to the hydrogenosome. This is Large ribosomal subunit protein uL2m (rpl2) from Nyctotherus ovalis.